The sequence spans 305 residues: tRNA dimethylallyltransferase 1 (305 aa).

Residue 10–17 (GPTASGKT) coordinates ATP. Residue 12–17 (TASGKT) coordinates substrate. Residues 35–38 (DSRQ) are interaction with substrate tRNA.

Belongs to the IPP transferase family. In terms of assembly, monomer. It depends on Mg(2+) as a cofactor.

It catalyses the reaction adenosine(37) in tRNA + dimethylallyl diphosphate = N(6)-dimethylallyladenosine(37) in tRNA + diphosphate. Catalyzes the transfer of a dimethylallyl group onto the adenine at position 37 in tRNAs that read codons beginning with uridine, leading to the formation of N6-(dimethylallyl)adenosine (i(6)A). This is tRNA dimethylallyltransferase 1 from Syntrophus aciditrophicus (strain SB).